We begin with the raw amino-acid sequence, 554 residues long: Trimethyltridecatetraene synthase (554 aa).

A helical membrane pass occupies residues 1–21; it reads MSAAVALAVILAVYVVLRYIS. Cys-464 is a heme binding site.

It belongs to the cytochrome P450 family. It depends on heme as a cofactor.

It localises to the membrane. It catalyses the reaction (6E,10E)-geranyllinalool + reduced [NADPH--hemoprotein reductase] + O2 = (3E,7E)-4,8,12-trimethyltrideca 1,3,7,11-tetraene + but-3-en-2-one + oxidized [NADPH--hemoprotein reductase] + 2 H2O + H(+). It functions in the pathway secondary metabolite biosynthesis; terpenoid biosynthesis. In terms of biological role, component of the volatile terpenes biosynthesis pathways. Converts mainly geranyllinalool to trimethyltridecatetraene (TMTT). In Zea mays (Maize), this protein is Trimethyltridecatetraene synthase.